The chain runs to 79 residues: Protein B6 (79 aa).

The protein is Protein B6 (B6) of Human herpesvirus 6B (strain Z29) (HHV-6 variant B).